The primary structure comprises 426 residues: MTKFETVRGMKDYIGIDAEKIRYLESTFRDLAIKYGYSEIITPVVEEFKLFALKGGEELRETMYVFKDKADRELSLRPEITPSVARAYIQNLQSSPKPIRLFYFGTVYRYDEPQYGRYREFRQAGIEMIGDSSILADLEVLDLLYNFYDKLNLSNDITIKINNIGIFRKIMDKYNIEDNLQEHILHLIDKNKINEALDILEKNLKNKDIIDFFNKILTKKDTKLEDIESLAELEEVSRLDIKSEFLYLFRLSRILSNLNIKFKIDLGFVRGLAYYTGLIFEVLHPSVQFSIAGGGRYDKLIELYGGLPSPAIGFAIGVERTLLVIKDLKVEEPVNVIVIGMSEDTIPSMFMVSRILRKEEYKVVINTKDQPLSKLLPYYASQGFKVAIIIGKQELEKNMITVRNLITRKQISVPLENIEDAIKQTL.

It belongs to the class-II aminoacyl-tRNA synthetase family.

The protein localises to the cytoplasm. The enzyme catalyses tRNA(His) + L-histidine + ATP = L-histidyl-tRNA(His) + AMP + diphosphate + H(+). The polypeptide is Histidine--tRNA ligase (Saccharolobus islandicus (strain L.S.2.15 / Lassen #1) (Sulfolobus islandicus)).